The chain runs to 524 residues: Bifunctional purine biosynthesis protein PurH (524 aa).

The MGS-like domain occupies 1-149; it reads MSDPVIKRAL…KNNESVTVVT (149 aa).

It belongs to the PurH family.

It catalyses the reaction (6R)-10-formyltetrahydrofolate + 5-amino-1-(5-phospho-beta-D-ribosyl)imidazole-4-carboxamide = 5-formamido-1-(5-phospho-D-ribosyl)imidazole-4-carboxamide + (6S)-5,6,7,8-tetrahydrofolate. It carries out the reaction IMP + H2O = 5-formamido-1-(5-phospho-D-ribosyl)imidazole-4-carboxamide. It participates in purine metabolism; IMP biosynthesis via de novo pathway; 5-formamido-1-(5-phospho-D-ribosyl)imidazole-4-carboxamide from 5-amino-1-(5-phospho-D-ribosyl)imidazole-4-carboxamide (10-formyl THF route): step 1/1. Its pathway is purine metabolism; IMP biosynthesis via de novo pathway; IMP from 5-formamido-1-(5-phospho-D-ribosyl)imidazole-4-carboxamide: step 1/1. This Chlorobium chlorochromatii (strain CaD3) protein is Bifunctional purine biosynthesis protein PurH.